The chain runs to 419 residues: MPGNNSAKGTATGNATALWRNAQLATLNPAMDGIGAVENAVIAVRNGRIAFAGPESDLPDDLSTADETTDCGGRWITPALIDCHTHLVFGGNRAMEFEMRLNGATYEEIAKAGGGIVSSVRDTRALSDEVLVAQALPRLDTLLSEGVSTIEIKSGYGLDIETELKMLRVARRLETLRPVRIVTSYLAAHATPADYKGRNADYITDVVLPGLEKAHAEGLADAVDGFCEGIAFSVKEIDRVFAAAQQRGLPVKLHAEQLSNLGGAELAASYNALSADHLEYLDETGAKALAKAGTVAVLLPGAFYALREKQLPPVQALRDAGAEIALATDCNPGTSPLTSLLLTMNMGATLFRMTVEECLTATTRNAAKALGLLAETGTLEAGKSADFAIWDIERPAELVYRIGFNPLHARIFKGQKVSP.

2 residues coordinate Fe(3+): H84 and H86. The Zn(2+) site is built by H84 and H86. Residues R93, Y156, and H189 each coordinate 4-imidazolone-5-propanoate. Position 156 (Y156) interacts with N-formimidoyl-L-glutamate. H254 provides a ligand contact to Fe(3+). H254 serves as a coordination point for Zn(2+). Residue Q257 participates in 4-imidazolone-5-propanoate binding. Residue D329 coordinates Fe(3+). Residue D329 participates in Zn(2+) binding. Residues N331 and G333 each contribute to the N-formimidoyl-L-glutamate site. T334 is a binding site for 4-imidazolone-5-propanoate.

Belongs to the metallo-dependent hydrolases superfamily. HutI family. Monomer. Forms a tightly packed homodimer in the crystal, but this seems to be an artifact of crystallization. It depends on Zn(2+) as a cofactor. Fe(3+) is required as a cofactor.

It is found in the cytoplasm. It catalyses the reaction 4-imidazolone-5-propanoate + H2O = N-formimidoyl-L-glutamate. The protein operates within amino-acid degradation; L-histidine degradation into L-glutamate; N-formimidoyl-L-glutamate from L-histidine: step 3/3. Its function is as follows. Catalyzes the hydrolytic cleavage of the carbon-nitrogen bond in imidazolone-5-propanoate to yield N-formimidoyl-L-glutamate. It is the third step in the universal histidine degradation pathway. The protein is Imidazolonepropionase of Agrobacterium fabrum (strain C58 / ATCC 33970) (Agrobacterium tumefaciens (strain C58)).